We begin with the raw amino-acid sequence, 139 residues long: Ribonuclease P protein component (139 aa).

Residues 120-139 (KPTTGVEYSPKNEKCESVLP) are disordered. Over residues 129 to 139 (PKNEKCESVLP) the composition is skewed to basic and acidic residues.

It belongs to the RnpA family. Consists of a catalytic RNA component (M1 or rnpB) and a protein subunit.

It carries out the reaction Endonucleolytic cleavage of RNA, removing 5'-extranucleotides from tRNA precursor.. Its function is as follows. RNaseP catalyzes the removal of the 5'-leader sequence from pre-tRNA to produce the mature 5'-terminus. It can also cleave other RNA substrates such as 4.5S RNA. The protein component plays an auxiliary but essential role in vivo by binding to the 5'-leader sequence and broadening the substrate specificity of the ribozyme. This Chlamydia caviae (strain ATCC VR-813 / DSM 19441 / 03DC25 / GPIC) (Chlamydophila caviae) protein is Ribonuclease P protein component.